The sequence spans 164 residues: Transforming protein STP (164 aa).

Residues 1–41 (MARGLGEGDPQENDESNGDPPHNTDERSDGDDGPTPYLPVT) form a disordered region. The segment at 122–135 (HSEHEQEGDKCTDC) is a zinc-finger region. A helical transmembrane segment spans residues 136–161 (SVTILLLLVIIVLLLIIIGLMLVIMF).

It is found in the membrane. Stp is required for transformation, but it is not required for replication of the virus. The T-lymphocyte is the target cell for transformation by herpesvirus saimiri. This Saimiriine herpesvirus 2 (strain 11) (SaHV-2) protein is Transforming protein STP (1).